A 306-amino-acid polypeptide reads, in one-letter code: MEITFFGTGAALPTKERNTQAIALNLDPYSNSIWLFDAGEGTQHQILHHSIKLGKINHIFITHMHGDHIYGLPGLLTSRSFQGGENKPLTIVGPRGIKNYVETTLQASLSRLNYPVTFIEIDDQLHYHHEGFTVSAYNLNHGVPSFGYRIEAPTTSGKIDVASLREIGMEPGPKYQEVKNSDSFIFNDKVYQSSDFKGEEKVGPKIAIFGDTMPCENELKLADNADLLVHEATYIDGDRSLADSHHHSHINDVLHLLEATNSKQALLNHISNRYNLSDIDVIYAELQNQYPNLKFKFVRDFDTFEI.

Residues H63, H65, D67, H68, H141, D211, and H269 each contribute to the Zn(2+) site. The Proton acceptor role is filled by D67.

It belongs to the RNase Z family. As to quaternary structure, homodimer. It depends on Zn(2+) as a cofactor.

The catalysed reaction is Endonucleolytic cleavage of RNA, removing extra 3' nucleotides from tRNA precursor, generating 3' termini of tRNAs. A 3'-hydroxy group is left at the tRNA terminus and a 5'-phosphoryl group is left at the trailer molecule.. In terms of biological role, zinc phosphodiesterase, which displays some tRNA 3'-processing endonuclease activity. Probably involved in tRNA maturation, by removing a 3'-trailer from precursor tRNA. The protein is Ribonuclease Z of Staphylococcus carnosus (strain TM300).